The sequence spans 360 residues: Alkanal monooxygenase alpha chain (360 aa).

The protein belongs to the bacterial luciferase oxidoreductase family. Heterodimer of an alpha and a beta chain.

The enzyme catalyses a long-chain fatty aldehyde + FMNH2 + O2 = a long-chain fatty acid + hnu + FMN + H2O + 2 H(+). In terms of biological role, light-emitting reaction in luminous bacteria. This is Alkanal monooxygenase alpha chain (luxA) from Photorhabdus luminescens (Xenorhabdus luminescens).